The chain runs to 217 residues: MFKKKNISLAVIRRLPRYLRYVEDLLNHDVLRISSSELSQRMGYTASQVRQDFNNFGGFGQQGYGYSTQVLYENLVKILGLDRNFKMVIVGVGNLGQALANYANFYKKGFRLIGLFDIDPQKVGKTIRDIKIEHIDKLKDFIKKNDVDIGVLCVPADVAQEVADIMVEGGIKGIWNFTAKEIEVKGDVVVENVHLIDSLMVLSYKLNEKLLEKERIK.

A DNA-binding region (H-T-H motif) is located at residues 17 to 56 (RYLRYVEDLLNHDVLRISSSELSQRMGYTASQVRQDFNNF). 91–96 (GVGNLG) is an NAD(+) binding site.

It belongs to the transcriptional regulatory Rex family. In terms of assembly, homodimer.

It is found in the cytoplasm. Its function is as follows. Modulates transcription in response to changes in cellular NADH/NAD(+) redox state. In Caldicellulosiruptor bescii (strain ATCC BAA-1888 / DSM 6725 / KCTC 15123 / Z-1320) (Anaerocellum thermophilum), this protein is Redox-sensing transcriptional repressor Rex.